The chain runs to 229 residues: Probable endo-1,4-beta-xylanase A (229 aa).

The first 18 residues, 1–18, serve as a signal peptide directing secretion; it reads MVSFKYLFLAASALGALA. 2 N-linked (GlcNAc...) asparagine glycosylation sites follow: Asn-30 and Asn-100. The GH11 domain occupies 41–229; sequence AGTPSSTGWN…SSGSSSITVY (189 aa). Glu-125 functions as the Nucleophile in the catalytic mechanism. Glu-216 functions as the Proton donor in the catalytic mechanism.

It belongs to the glycosyl hydrolase 11 (cellulase G) family.

The protein resides in the secreted. It carries out the reaction Endohydrolysis of (1-&gt;4)-beta-D-xylosidic linkages in xylans.. It functions in the pathway glycan degradation; xylan degradation. Functionally, endo-1,4-beta-xylanase involved in the hydrolysis of xylan, a major structural heterogeneous polysaccharide found in plant biomass representing the second most abundant polysaccharide in the biosphere, after cellulose. In Aspergillus clavatus (strain ATCC 1007 / CBS 513.65 / DSM 816 / NCTC 3887 / NRRL 1 / QM 1276 / 107), this protein is Probable endo-1,4-beta-xylanase A (xlnA).